Consider the following 569-residue polypeptide: Peroxisomal targeting signal receptor (569 aa).

C9 is covalently cross-linked (Glycyl cysteine thioester (Cys-Gly) (interchain with G-Cter in ubiquitin)). An amphipathic helix 1 (AH1) region spans residues 10–32; the sequence is AANANPLAQFFKQSQHDTSLEQS. K21 participates in a covalent cross-link: Glycyl lysine isopeptide (Lys-Gly) (interchain with G-Cter in ubiquitin). The disordered stretch occupies residues 23 to 42; it reads SQHDTSLEQSLRNSAHDTHQ. Residues 57 to 72 form an amphipathic helix 2 (AH2) region; the sequence is RAHMEQFMNQSTPFNF. 2 short sequence motifs (wxxxF/Y motif) span residues 118 to 122 and 183 to 187; these read WSSEF and WEQQF. Positions 218 to 234 are amphipathic helix 4 (AH4); the sequence is FDQVWDNIQETYADNML. Residues 243-247 carry the WxxxF/Y motif 3 motif; the sequence is WEKDF. TPR repeat units lie at residues 272–305, 306–339, 340–377, 378–415, 416–449, 450–483, and 484–517; these read LDAY…NPGH, VDAW…SPQN, LVAL…VAER, ARNA…ANMD, SEVQ…NPND, ALAW…NPNF, and VRAR…HEVE.

The protein belongs to the peroxisomal targeting signal receptor family. As to quaternary structure, interacts (via WxxxF/Y and LVxEF motifs) with PEX14; promoting translocation through the PEX13-PEX14 docking complex. In terms of processing, monoubiquitinated at Cys-9 by PEX2 during PEX5 passage through the retrotranslocation channel: monoubiquitination acts as a signal for PEX5 extraction and is required for proper export from peroxisomes and recycling. When PEX5 recycling is compromised, polyubiquitinated at Lys-21 by PEX10 during its passage through the retrotranslocation channel, leading to its degradation.

Its subcellular location is the cytoplasm. The protein localises to the cytosol. It localises to the peroxisome matrix. Its function is as follows. Receptor that mediates peroxisomal import of proteins containing a C-terminal PTS1-type tripeptide peroxisomal targeting signal (SKL-type). Binds to cargo proteins containing a PTS1 peroxisomal targeting signal in the cytosol, and translocates them into the peroxisome matrix by passing through the PEX13-PEX14 docking complex along with cargo proteins. PEX5 receptor is then retrotranslocated into the cytosol, leading to release of bound cargo in the peroxisome matrix, and reset for a subsequent peroxisome import cycle. This is Peroxisomal targeting signal receptor (PEX5) from Pichia angusta (Yeast).